The primary structure comprises 533 residues: Lymphocyte cytosolic protein 2 (533 aa).

Residues 15-81 (WDPDSLADYF…INKNEERRSI (67 aa)) form the SAM domain. Phosphotyrosine is present on tyrosine 23. The disordered stretch occupies residues 78-417 (RRSIFTRKPQ…PPSPAEEENS (340 aa)). A compositionally biased stretch (acidic residues) spans 108-155 (FEEDDYESPNDDQDGEDDGDYESPNEEEEAPVEDDADYEPPPSNDEEA). The segment covering 184–213 (QQPPVPPQRPMAALPPPPAGRNHSPLPPPQ) has biased composition (pro residues). The residue at position 207 (serine 207) is a Phosphoserine. 2 stretches are compositionally biased toward polar residues: residues 337–350 (MSSN…TKPS) and 365–376 (SESNSSFPQSAS). A phosphoserine mark is found at serine 376 and serine 410. The span at 400–411 (LPLPNKPRPPSP) shows a compositional bias: pro residues. An SH2 domain is found at 422–530 (WYVSYITRPE…RYQCTLTHAA (109 aa)).

In terms of assembly, interacts with SLA. Interacts with CBLB. Interacts with GRB2. Interacts with SHB. Interacts with PRAM1. Interacts (via SH2 domain) with CD6 (via tyrosine phosphorylated C-terminus). Interacts with FYB1 and the phosphorylated form of FYB2. Interacts with 14-3-3 adapter/YWHAZ; this phosphorylation leads to YWHAZ proteolytic degradation. Interacts with VAV1; this interaction plays a role in TCR-mediated cytokine production. Interacts with AGER; this interaction plays an important role in AGER-mediated pro-inflammatory responses and cytokine release. Post-translationally, phosphorylated after T-cell receptor activation by ZAP70, ITK and TXK, which leads to the up-regulation of Th1 preferred cytokine IL-2. SYK-dependent phosphorylation is required for recruitment of PI3K signaling components. In terms of tissue distribution, highly expressed in spleen, thymus and peripheral blood leukocytes. Highly expressed also in T-cell and monocytic cell lines, expressed at lower level in B-cell lines. Not detected in fibroblast or neuroblastoma cell lines.

It is found in the cytoplasm. In terms of biological role, adapter protein primarily involved in signaling pathways within T-cells, as well as other immune cells such as platelets, mast cells, and natural killer (NK) cells. Plays a crucial role for transducing signal from the T-cell receptor (TCR) after antigen recognition leading to T-cell activation. Mechanistically, once phosphorylated by the kinase ZAP70, mediates interactions with the guanine-nucleotide exchange factor VAV1, the adapter protein NCK and the kinase ITK. In turn, stimulates the activation of PKC-theta/PRKCQ and NF-kappa-B transcriptional activity in response to CD3 and CD28 costimulation. Also plays an essential role in AGER-induced signaling pathways including p38 MAPK and ERK1/2 activation leading to cytokine release and pro-inflammatory responses. This Homo sapiens (Human) protein is Lymphocyte cytosolic protein 2 (LCP2).